We begin with the raw amino-acid sequence, 248 residues long: Pyridoxine 5'-phosphate synthase (248 aa).

Asn-10 lines the 3-amino-2-oxopropyl phosphate pocket. 1-deoxy-D-xylulose 5-phosphate is bound at residue 12–13 (DH). Arg-21 serves as a coordination point for 3-amino-2-oxopropyl phosphate. His-46 functions as the Proton acceptor in the catalytic mechanism. 1-deoxy-D-xylulose 5-phosphate is bound by residues Arg-48 and His-53. Glu-73 functions as the Proton acceptor in the catalytic mechanism. A 1-deoxy-D-xylulose 5-phosphate-binding site is contributed by Thr-103. His-194 acts as the Proton donor in catalysis. 3-amino-2-oxopropyl phosphate-binding positions include Gly-195 and 216–217 (GH).

The protein belongs to the PNP synthase family. As to quaternary structure, homooctamer; tetramer of dimers.

The protein resides in the cytoplasm. The enzyme catalyses 3-amino-2-oxopropyl phosphate + 1-deoxy-D-xylulose 5-phosphate = pyridoxine 5'-phosphate + phosphate + 2 H2O + H(+). It participates in cofactor biosynthesis; pyridoxine 5'-phosphate biosynthesis; pyridoxine 5'-phosphate from D-erythrose 4-phosphate: step 5/5. Functionally, catalyzes the complicated ring closure reaction between the two acyclic compounds 1-deoxy-D-xylulose-5-phosphate (DXP) and 3-amino-2-oxopropyl phosphate (1-amino-acetone-3-phosphate or AAP) to form pyridoxine 5'-phosphate (PNP) and inorganic phosphate. The protein is Pyridoxine 5'-phosphate synthase of Legionella pneumophila (strain Paris).